Reading from the N-terminus, the 75-residue chain is Large ribosomal subunit protein bL31 (75 aa).

The protein belongs to the bacterial ribosomal protein bL31 family. Type A subfamily. Part of the 50S ribosomal subunit.

Its function is as follows. Binds the 23S rRNA. This Bradyrhizobium diazoefficiens (strain JCM 10833 / BCRC 13528 / IAM 13628 / NBRC 14792 / USDA 110) protein is Large ribosomal subunit protein bL31.